The chain runs to 257 residues: Insulin-induced gene 1 protein (257 aa).

At 1 to 64 the chain is on the cytoplasmic side; sequence MPRLHDHVWS…ARPGSWHHDL (64 aa). The tract at residues 32–54 is disordered; that stretch reads CPQGSGAPEPAPRSPRAGTAGCG. The chain crosses the membrane as a helical span at residues 65-87; it reads VQRSLVLFSFGVVLALVLNLLQI. Residues 88–106 lie on the Extracellular side of the membrane; sequence QRNVTLFPDEVIATIFSSA. Residues 107-124 form a helical membrane-spanning segment; it reads WWVPPCCGTAAAVVGLLY. Topologically, residues 125–139 are cytoplasmic; that stretch reads PCIDSHLGEPHKFKR. Glycyl lysine isopeptide (Lys-Gly) (interchain with G-Cter in ubiquitin) cross-links involve residues K136 and K138. A helical transmembrane segment spans residues 140 to 162; sequence EWASVMRCIAVFVGINHASAKLD. At 163-165 the chain is on the extracellular side; that stretch reads FAN. The chain crosses the membrane as a helical span at residues 166-184; it reads NVQLSLTLAALSLGLWWTF. Residues 185–189 are Cytoplasmic-facing; sequence DRSRS. S187 is subject to Phosphoserine. Residues 190-211 form a helical membrane-spanning segment; the sequence is GLGLGITIAFLATLITQFLVYN. Topologically, residues 212 to 225 are extracellular; it reads GVYQYTSPDFLYIR. The chain crosses the membrane as a helical span at residues 226–243; the sequence is SWLPCIFFSGGVTVGNIG. The Cytoplasmic segment spans residues 244–257; the sequence is RQLAMGVPEKPHSD. Residues 251 to 257 carry the KxHxx motif; sequence PEKPHSD.

It belongs to the INSIG family. As to quaternary structure, interacts with SCAP; interaction is direct and only takes place in the presence of sterols; it prevents interaction between SCAP and the coat protein complex II (COPII). Associates with the SCAP-SREBP complex (composed of SCAP and SREBF1/SREBP1 or SREBF2/SREBP2); association is mediated via its interaction with SCAP and only takes place in the presence of sterols. Interaction with SCAP is mutually exclusive with PAQR3. Interacts with HMGCR (via its SSD); the interaction, accelerated by sterols, leads to the recruitment of HMGCR to AMFR/gp78 for its ubiquitination by the sterol-mediated ERAD pathway. Interacts with AMFR/gp78 (via its membrane domain); the interaction recruits HMCR at the ER membrane for its ubiquitination and degradation by the sterol-mediated ERAD pathway. Interacts with SOAT2/ACAT2; leading to promote recruitment of AMFR/gp78 and subsequent ubiquitination of SOAT2/ACAT2. Interacts with RNF139. Interacts with RNF145. Phosphorylation at Ser-187 by PCK1 reduces binding to oxysterol, disrupting the interaction between INSIG1 and SCAP, thereby promoting nuclear translocation of SREBP proteins (SREBF1/SREBP1 or SREBF2/SREBP2) and subsequent transcription of downstream lipogenesis-related genes. Post-translationally, ubiquitinated by AMFR/gp78 in response to sterol deprivation, leading to its degradation: when the SCAP-SREBP complex becomes dissociated from INSIG1, INSIG1 is then ubiquitinated and degraded in proteasomes. Although ubiquitination is required for rapid INSIG1 degradation, it is not required for release of the SCAP-SREBP complex. Ubiquitinated by RNF139.

It is found in the endoplasmic reticulum membrane. In terms of biological role, oxysterol-binding protein that mediates feedback control of cholesterol synthesis by controlling both endoplasmic reticulum to Golgi transport of SCAP and degradation of HMGCR. Acts as a negative regulator of cholesterol biosynthesis by mediating the retention of the SCAP-SREBP complex in the endoplasmic reticulum, thereby blocking the processing of sterol regulatory element-binding proteins (SREBPs) SREBF1/SREBP1 and SREBF2/SREBP2. Binds oxysterol, including 25-hydroxycholesterol, regulating interaction with SCAP and retention of the SCAP-SREBP complex in the endoplasmic reticulum. In presence of oxysterol, interacts with SCAP, retaining the SCAP-SREBP complex in the endoplasmic reticulum, thereby preventing SCAP from escorting SREBF1/SREBP1 and SREBF2/SREBP2 to the Golgi. Sterol deprivation or phosphorylation by PCK1 reduce oxysterol-binding, disrupting the interaction between INSIG1 and SCAP, thereby promoting Golgi transport of the SCAP-SREBP complex, followed by processing and nuclear translocation of SREBF1/SREBP1 and SREBF2/SREBP2. Also regulates cholesterol synthesis by regulating degradation of HMGCR: initiates the sterol-mediated ubiquitin-mediated endoplasmic reticulum-associated degradation (ERAD) of HMGCR via recruitment of the reductase to the ubiquitin ligases AMFR/gp78 and/or RNF139. Also regulates degradation of SOAT2/ACAT2 when the lipid levels are low: initiates the ubiquitin-mediated degradation of SOAT2/ACAT2 via recruitment of the ubiquitin ligases AMFR/gp78. This chain is Insulin-induced gene 1 protein, found in Cricetulus griseus (Chinese hamster).